The following is a 251-amino-acid chain: 3-deoxy-manno-octulosonate cytidylyltransferase (251 aa).

The protein belongs to the KdsB family.

Its subcellular location is the cytoplasm. It carries out the reaction 3-deoxy-alpha-D-manno-oct-2-ulosonate + CTP = CMP-3-deoxy-beta-D-manno-octulosonate + diphosphate. The protein operates within nucleotide-sugar biosynthesis; CMP-3-deoxy-D-manno-octulosonate biosynthesis; CMP-3-deoxy-D-manno-octulosonate from 3-deoxy-D-manno-octulosonate and CTP: step 1/1. It functions in the pathway bacterial outer membrane biogenesis; lipopolysaccharide biosynthesis. Its function is as follows. Activates KDO (a required 8-carbon sugar) for incorporation into bacterial lipopolysaccharide in Gram-negative bacteria. This chain is 3-deoxy-manno-octulosonate cytidylyltransferase, found in Rhizobium etli (strain CIAT 652).